The chain runs to 749 residues: Triacylglycerol lipase 5 (749 aa).

Residues 54–59 (HAISYD) carry the HXXXXD acyltransferase motif motif. The 206-residue stretch at 183-388 (LVLSGGSTFG…DNDMPISRLS (206 aa)) folds into the PNPLA domain. Residues 214 to 218 (GSSAG) carry the GXSXG motif. The active-site Nucleophile is the Ser-216. Asn-270, Asn-289, Asn-297, Asn-304, and Asn-321 each carry an N-linked (GlcNAc...) asparagine glycan. The Proton acceptor role is filled by Asp-375. Residues Asn-474 and Asn-589 are each glycosylated (N-linked (GlcNAc...) asparagine). A disordered region spans residues 585 to 643 (IKSPNKTAAPGRFPLQPLPSPSSTFNKRKMDMLSPSPSPSTSPQRSKSSFTQQGTRQKA). Positions 623–633 (PSTSPQRSKSS) are enriched in low complexity. Residues 634 to 643 (FTQQGTRQKA) are compositionally biased toward polar residues. Residue Ser-645 is modified to Phosphoserine. 3 N-linked (GlcNAc...) asparagine glycosylation sites follow: Asn-680, Asn-714, and Asn-742.

The protein localises to the lipid droplet. The enzyme catalyses a triacylglycerol + H2O = a diacylglycerol + a fatty acid + H(+). It catalyses the reaction 1-(9Z-octadecenoyl)-sn-glycero-3-phosphate + (9Z)-octadecenoyl-CoA = 1,2-di-(9Z-octadecenoyl)-sn-glycero-3-phosphate + CoA. It carries out the reaction 1-(9Z-octadecenoyl)-sn-glycero-3-phosphate + hexadecanoyl-CoA = 1-hexadecanoyl-2-(9Z-octadecenoyl)-sn-glycero-3-phosphate + CoA. With respect to regulation, loses its lipolytic activity in cells lacking nonpolar lipids, but retains its side activity as lysophospholipid acyltransferase. Its function is as follows. Lipid particle-localized triacylglycerol (TAG) lipase. The lipid droplet/particle is a lipid storage compartment which serves as a depot of energy and building blocks for membrane lipid biosynthesis. Involved in the mobilization of the non-polar storage lipids triacylglycerols (TAGs) from lipid particles by hydrolysis of TAGs, releasing and supplying specific fatty acids to the appropriate metabolic pathways. Also catalyzes the acylation of lysophosphatidic acid (LPA). The protein is Triacylglycerol lipase 5 (TGL5) of Saccharomyces cerevisiae (strain ATCC 204508 / S288c) (Baker's yeast).